We begin with the raw amino-acid sequence, 3232 residues long: D-lysergyl-peptide-synthetase subunit 1 (3232 aa).

The tract at residues glycine 90 to isoleucine 474 is adenylation (A) domain 1. The Carrier 1 domain maps to arginine 617–threonine 686. Serine 649 bears the O-(pantetheine 4'-phosphoryl)serine mark. Positions glutamate 731–asparagine 1122 are condensation (C) domain 1. The adenylation (A) domain 2 stretch occupies residues glutamine 1165–arginine 1572. The Carrier 2 domain maps to threonine 1717–glycine 1785. An O-(pantetheine 4'-phosphoryl)serine modification is found at serine 1749. The condensation (C) domain 2 stretch occupies residues glutamate 1835–methionine 2252. An adenylation (A) domain 3 region spans residues glutamine 2276–arginine 2675. A Carrier 3 domain is found at methionine 2810–glutamate 2878. Residue serine 2842 is modified to O-(pantetheine 4'-phosphoryl)serine. Positions leucine 2943–isoleucine 3218 are cyclization (Cyc) domain.

This sequence belongs to the NRP synthetase family.

It participates in alkaloid biosynthesis; ergot alkaloid biosynthesis. In terms of biological role, D-lysergyl-peptide-synthetase subunit 1; part of the gene cluster that mediates the biosynthesis of fungal ergot alkaloid. DmaW catalyzes the first step of ergot alkaloid biosynthesis by condensing dimethylallyl diphosphate (DMAP) and tryptophan to form 4-dimethylallyl-L-tryptophan. The second step is catalyzed by the methyltransferase easF that methylates 4-dimethylallyl-L-tryptophan in the presence of S-adenosyl-L-methionine, resulting in the formation of 4-dimethylallyl-L-abrine. The catalase easC and the FAD-dependent oxidoreductase easE then transform 4-dimethylallyl-L-abrine to chanoclavine-I which is further oxidized by easD in the presence of NAD(+), resulting in the formation of chanoclavine-I aldehyde. Agroclavine dehydrogenase easG then mediates the conversion of chanoclavine-I aldehyde to agroclavine via a non-enzymatic adduct reaction: the substrate is an iminium intermediate that is formed spontaneously from chanoclavine-I aldehyde in the presence of glutathione. The presence of easA is not required to complete this reaction. Further conversion of agroclavine to paspalic acid is a two-step process involving oxidation of agroclavine to elymoclavine and of elymoclavine to paspalic acid, the second step being performed by the elymoclavine oxidase cloA. Paspalic acid is then further converted to D-lysergic acid. Ergopeptines are assembled from D-lysergic acid and three different amino acids by the D-lysergyl-peptide-synthetases composed each of a monomudular and a trimodular nonribosomal peptide synthetase subunit. LpsB and lpsC encode the monomodular subunits responsible for D-lysergic acid activation and incorporation into the ergopeptine backbone. LpsA1 and A2 subunits encode the trimodular nonribosomal peptide synthetase assembling the tripeptide portion of ergopeptines. LpsA1 is responsible for formation of the major ergopeptine, ergotamine, and lpsA2 for alpha-ergocryptine, the minor ergopeptine of the total alkaloid mixture elaborated by C.purpurea. D-lysergyl-tripeptides are assembled by the nonribosomal peptide synthetases and released as N-(D-lysergyl-aminoacyl)-lactams. Cyclolization of the D-lysergyl-tripeptides is performed by the Fe(2+)/2-ketoglutarate-dependent dioxygenase easH which introduces a hydroxyl group into N-(D-lysergyl-aminoacyl)-lactam at alpha-C of the aminoacyl residue followed by spontaneous condensation with the terminal lactam carbonyl group. The protein is D-lysergyl-peptide-synthetase subunit 1 of Claviceps purpurea (Ergot fungus).